We begin with the raw amino-acid sequence, 310 residues long: Ribose-phosphate pyrophosphokinase (310 aa).

ATP-binding positions include 34-36 (DQE) and 93-94 (RQ). Mg(2+) contacts are provided by histidine 127 and aspartate 167. Lysine 190 is a catalytic residue. D-ribose 5-phosphate-binding positions include arginine 192, aspartate 216, and 220 to 224 (DSGGT).

It belongs to the ribose-phosphate pyrophosphokinase family. Class I subfamily. Homohexamer. Mg(2+) is required as a cofactor.

The protein localises to the cytoplasm. The catalysed reaction is D-ribose 5-phosphate + ATP = 5-phospho-alpha-D-ribose 1-diphosphate + AMP + H(+). Its pathway is metabolic intermediate biosynthesis; 5-phospho-alpha-D-ribose 1-diphosphate biosynthesis; 5-phospho-alpha-D-ribose 1-diphosphate from D-ribose 5-phosphate (route I): step 1/1. Involved in the biosynthesis of the central metabolite phospho-alpha-D-ribosyl-1-pyrophosphate (PRPP) via the transfer of pyrophosphoryl group from ATP to 1-hydroxyl of ribose-5-phosphate (Rib-5-P). This is Ribose-phosphate pyrophosphokinase from Agrobacterium fabrum (strain C58 / ATCC 33970) (Agrobacterium tumefaciens (strain C58)).